Consider the following 322-residue polypeptide: AB hydrolase superfamily protein FGSG_00044 (322 aa).

Positions 36 to 319 constitute an AB hydrolase-1 domain; it reads RTTPKQPVAI…ITAEVRRIVK (284 aa).

This sequence belongs to the AB hydrolase superfamily.

Its pathway is mycotoxin biosynthesis. Its function is as follows. AB hydrolase superfamily protein; part of the gene cluster that mediates the biosynthesis of gramillins A and B, bicyclic lipopeptides that induce cell death in maize leaves but not in wheat leaves. The nonribosomal peptide synthetase GRA1 incorporates respectively a glutamic adic (Glu), a leucine (Leu), a serine (Ser), a hydroxyglutamine (HOGln), a 2-amino decanoic acid, and 2 cysteins (CysB and CysA). The biosynthesis of 2-amino decanoic acid incorporated in gramillins could be initiated by a fatty acid synthase composed of the alpha and beta subunits FGSG_00036 and FGSG_11656. The cytochrome P450 monooxygenase FGSG_15680 could hydroxylate the fatty acid chain. Subsequent oxidation to the ketone by the oxidoreductase FGSG_00048 and transamination by aminotransferase FGSG_00049 could form 2-amino-decanoic acid. On the other hand, FGSG_15680 could also be responsible for the HO-modified glutamine at the gamma-position. Whether hydroxylation occurs on the fully assembled product or on the Gln residue prior to assembly into the gramillins requires further proof. The thioredoxin FGSG_00043 could also be required for the disulfide-bond formation between CysA and CysB. The specific involvement of the remaining proteins from the cluster is more difficult to discern, but could have broader regulatory (FGSG_00040 and FGSG_11657) or enzymatic functions (FGSG_00044 and FGSG_00045). The final C-domain of GRA1 does not possess the expected sequence of a termination CT domain, often implicated in macrocyclization and release of a cyclopeptidein fungal NRPs; and the thioesterase FGSG_00047 may act in concert with the terminal C-domain of GRA1 to catalyze the formation of the macrocyclic anhydride and release of the products. The chain is AB hydrolase superfamily protein FGSG_00044 from Gibberella zeae (strain ATCC MYA-4620 / CBS 123657 / FGSC 9075 / NRRL 31084 / PH-1) (Wheat head blight fungus).